A 342-amino-acid chain; its full sequence is MIRVAINGFGRVGRNVLRALYETGQNKQIQIVAINELAEPEGVAHLLKYDTAHGRFRFPVVLDNQQLVVAGDHITLLQQENIRDLPWAQLDIDVVLECTGVNNERVHGEQHIAQGAKKVLFSQPCGPDVDATIIMGINEESLKASDSIVSAGSCTTNCIVPVIQVLDEAFSVSSGTITTIHSSMHDQQVIDAYHPDLRRTRAASQSIIPVDTKLARGIERVLPKFAGKFEAIAVRVPTINVSAMDLSVTLDAKVTIDDVNQALKTVKNGRLNGILDFTEEPLVSVDFNHDAHSCIVDGTQTRVSHKQLVKLLVWCDNEWGFSNRMIDIVLVMNTLSLGNTGK.

11–12 contacts NAD(+); that stretch reads RV. Residues 153 to 155, Arg-199, 212 to 213, and Arg-235 contribute to the substrate site; these read SCT and TK. The active-site Nucleophile is Cys-154. Asn-317 contributes to the NAD(+) binding site.

This sequence belongs to the glyceraldehyde-3-phosphate dehydrogenase family. Epd subfamily. Homotetramer.

Its subcellular location is the cytoplasm. The catalysed reaction is D-erythrose 4-phosphate + NAD(+) + H2O = 4-phospho-D-erythronate + NADH + 2 H(+). Its pathway is cofactor biosynthesis; pyridoxine 5'-phosphate biosynthesis; pyridoxine 5'-phosphate from D-erythrose 4-phosphate: step 1/5. Functionally, catalyzes the NAD-dependent conversion of D-erythrose 4-phosphate to 4-phosphoerythronate. The polypeptide is D-erythrose-4-phosphate dehydrogenase (Pseudoalteromonas atlantica (strain T6c / ATCC BAA-1087)).